Here is a 267-residue protein sequence, read N- to C-terminus: Interleukin-1 beta (267 aa).

The propeptide occupies 1 to 115 (MAPVPELTSE…DTWDDGFVCD (115 aa)).

The protein belongs to the IL-1 family. In terms of assembly, monomer. In its precursor form, weakly interacts with full-length MEFV; the mature cytokine does not interact at all. Interacts with integrins ITGAV:ITGBV and ITGA5:ITGB1; integrin-binding is required for IL1B signaling. Interacts with cargo receptor TMED10; the interaction is direct and is required for the secretion of IL1B mature form. Interacts with HSP90AB1; the interaction facilitates cargo translocation into the ERGIC. Interacts with HSP90B1; the interaction facilitates cargo translocation into the ERGIC.

The protein localises to the cytoplasm. It is found in the cytosol. The protein resides in the secreted. Its subcellular location is the lysosome. It localises to the extracellular exosome. Potent pro-inflammatory cytokine. Initially discovered as the major endogenous pyrogen, induces prostaglandin synthesis, neutrophil influx and activation, T-cell activation and cytokine production, B-cell activation and antibody production, and fibroblast proliferation and collagen production. Promotes Th17 differentiation of T-cells. Synergizes with IL12/interleukin-12 to induce IFNG synthesis from T-helper 1 (Th1) cells. Plays a role in angiogenesis by inducing VEGF production synergistically with TNF and IL6. Involved in transduction of inflammation downstream of pyroptosis: its mature form is specifically released in the extracellular milieu by passing through the gasdermin-D (GSDMD) pore. The chain is Interleukin-1 beta (IL1B) from Felis catus (Cat).